A 922-amino-acid polypeptide reads, in one-letter code: MNVEQFAQELKLPPQLLLEQLKAAGVSKNDVVDPVTEADKAHLLDYLRKMHGGGGGETGKTKITITRKQTGEIRKTDSTGKSRTIQVEVRKSRTYVKRDPAALAAEALAAAEPAAAAPAAPPPALEEVPAEPAPIEAQAPVAETPAAEPAVVEAPAPEPAVTAEVTAPAPVEAAPEPAPAAKPEGEAAPVKKTTRIKKASILNEAEVKAREDEARRHQALLERQAADAKARIEREALRKQAEAAREAAKLAEAQKAAAPAPAAPTEKTLHKPDKPAAAKGAKGPDKKPAGAWKDDAARRRGGLKTRGGAAPDAGWRGRKGKSKSGQEETTFVAPTEPIVREVLVPETITVAELAHKMSVKAAEVIKALMKLGSMVTINQVLDQETAIIVVEEMGHIGKPAALDTPEAFLIETGEPGEAEMVARPPVVTVMGHVDHGKTSLLDTIRRTRVASGEAGGITQHIGAYHVETEKGVITFLDTPGHEAFTAMRARGAKATDIVVLVVAADDGVMPQTIEAIHHAKAAGVPLVVAVNKIDKPDANPERIRQELVAQGVTPEEWGGDTQFVEVSAKANTNINGLLDAILLQAEVLELQAPADGPAKGIVIEARLDKGKGPVATLLVQSGTLRRGDMVLAGQVYGRVRAMLDEAGKTVTEAGPSIPVEIQGLSDVPQAGEDMMVLPDERKAREIALFRQGKYRDVQLAKKQAAKLESMFDQMGQGEVQHLPIILKADMQGSYEGLAHALGKISTDEVKVNIIHSGVGAITESDVNLALASKAVLIGFNVRADASARKLAESSGVDIRYYNIIYEAVDEVKAALSGMLAPEKKESVIGTVEVRQVFVISKVGTIAGCYVTDGVVKRGAGVRLIRNNVVIHQGELDSLKRFKDDVKEVKANFECGLSLKNFNDIQEGDILEVFEVVEVARSL.

The segment at 243–329 (AAREAAKLAE…GKSKSGQEET (87 aa)) is disordered. A compositionally biased stretch (low complexity) spans 250–264 (LAEAQKAAAPAPAAP). Over residues 267-298 (KTLHKPDKPAAAKGAKGPDKKPAGAWKDDAAR) the composition is skewed to basic and acidic residues. A tr-type G domain is found at 422–589 (ARPPVVTVMG…AILLQAEVLE (168 aa)). The G1 stretch occupies residues 431–438 (GHVDHGKT). 431-438 (GHVDHGKT) lines the GTP pocket. The interval 456-460 (GITQH) is G2. The tract at residues 477 to 480 (DTPG) is G3. GTP is bound by residues 477–481 (DTPGH) and 531–534 (NKID). The G4 stretch occupies residues 531–534 (NKID). The tract at residues 567-569 (SAK) is G5.

Belongs to the TRAFAC class translation factor GTPase superfamily. Classic translation factor GTPase family. IF-2 subfamily.

The protein resides in the cytoplasm. Functionally, one of the essential components for the initiation of protein synthesis. Protects formylmethionyl-tRNA from spontaneous hydrolysis and promotes its binding to the 30S ribosomal subunits. Also involved in the hydrolysis of GTP during the formation of the 70S ribosomal complex. This is Translation initiation factor IF-2 from Thiobacillus denitrificans (strain ATCC 25259 / T1).